The chain runs to 189 residues: Thymidine kinase (189 aa).

Residues 9 to 16 (GTMNSGKT) and 85 to 88 (DESQ) each bind ATP. Glu86 (proton acceptor) is an active-site residue. Positions 143, 146, 180, and 183 each coordinate Zn(2+).

The protein belongs to the thymidine kinase family. Homotetramer.

Its subcellular location is the cytoplasm. The catalysed reaction is thymidine + ATP = dTMP + ADP + H(+). This Streptococcus pyogenes serotype M6 (strain ATCC BAA-946 / MGAS10394) protein is Thymidine kinase.